A 347-amino-acid polypeptide reads, in one-letter code: Dihydroorotase (347 aa).

Zn(2+) is bound by residues H14 and H16. Residues 16-18 and N42 contribute to the substrate site; that span reads HLR. Residues K100, H137, and H175 each coordinate Zn(2+). Residue K100 is modified to N6-carboxylysine. Residue H137 participates in substrate binding. L220 is a substrate binding site. D248 is a Zn(2+) binding site. D248 is a catalytic residue. H252 and A264 together coordinate substrate.

The protein belongs to the metallo-dependent hydrolases superfamily. DHOase family. Class II DHOase subfamily. In terms of assembly, homodimer. Zn(2+) is required as a cofactor.

It catalyses the reaction (S)-dihydroorotate + H2O = N-carbamoyl-L-aspartate + H(+). It participates in pyrimidine metabolism; UMP biosynthesis via de novo pathway; (S)-dihydroorotate from bicarbonate: step 3/3. Functionally, catalyzes the reversible cyclization of carbamoyl aspartate to dihydroorotate. The sequence is that of Dihydroorotase from Pseudomonas syringae pv. syringae (strain B728a).